A 577-amino-acid polypeptide reads, in one-letter code: Sulfite reductase [NADPH] hemoprotein beta-component (577 aa).

4 residues coordinate [4Fe-4S] cluster: cysteine 440, cysteine 446, cysteine 486, and cysteine 490. Residue cysteine 490 coordinates siroheme.

Belongs to the nitrite and sulfite reductase 4Fe-4S domain family. As to quaternary structure, alpha(8)-beta(8). The alpha component is a flavoprotein, the beta component is a hemoprotein. It depends on siroheme as a cofactor. Requires [4Fe-4S] cluster as cofactor.

The catalysed reaction is hydrogen sulfide + 3 NADP(+) + 3 H2O = sulfite + 3 NADPH + 4 H(+). The protein operates within sulfur metabolism; hydrogen sulfide biosynthesis; hydrogen sulfide from sulfite (NADPH route): step 1/1. Functionally, component of the sulfite reductase complex that catalyzes the 6-electron reduction of sulfite to sulfide. This is one of several activities required for the biosynthesis of L-cysteine from sulfate. This Vibrio cholerae serotype O1 (strain ATCC 39315 / El Tor Inaba N16961) protein is Sulfite reductase [NADPH] hemoprotein beta-component.